A 172-amino-acid polypeptide reads, in one-letter code: Mesogenin-1 (172 aa).

Positions 1 to 69 (METLHHPLVK…SPYSSSSHTQ (69 aa)) are disordered. Positions 18–29 (SSDSEPNSSCMA) are enriched in polar residues. Over residues 42 to 66 (SLSQTPSPQSLSPAVSYESPYSSSS) the composition is skewed to low complexity. The bHLH domain occupies 108–162 (QRRRKASEREKLRMRAIAEALHTLRNNLPPMYSQGRQPLTKIQTLKCTINYISEL).

The protein resides in the nucleus. In terms of biological role, involved in specifying the paraxial, but not dorsal, mesoderm. May regulate the expression of T-box transcription factors required for mesoderm formation and differentiation, such as brachyury T, wnt8, vegt and eomes. The chain is Mesogenin-1 (msgn1) from Xenopus tropicalis (Western clawed frog).